Reading from the N-terminus, the 310-residue chain is Homoserine kinase (310 aa).

91–101 (PIGSGLGSSAC) lines the ATP pocket.

This sequence belongs to the GHMP kinase family. Homoserine kinase subfamily.

The protein localises to the cytoplasm. It carries out the reaction L-homoserine + ATP = O-phospho-L-homoserine + ADP + H(+). Its pathway is amino-acid biosynthesis; L-threonine biosynthesis; L-threonine from L-aspartate: step 4/5. Functionally, catalyzes the ATP-dependent phosphorylation of L-homoserine to L-homoserine phosphate. This Escherichia coli (strain SMS-3-5 / SECEC) protein is Homoserine kinase.